A 273-amino-acid polypeptide reads, in one-letter code: NAD kinase (273 aa).

Asp-53 (proton acceptor) is an active-site residue. NAD(+)-binding positions include 53-54 (DG), Arg-58, 128-129 (NE), Asp-157, 168-173 (TAYNFS), and Ala-192.

This sequence belongs to the NAD kinase family. It depends on a divalent metal cation as a cofactor.

The protein resides in the cytoplasm. It catalyses the reaction NAD(+) + ATP = ADP + NADP(+) + H(+). Involved in the regulation of the intracellular balance of NAD and NADP, and is a key enzyme in the biosynthesis of NADP. Catalyzes specifically the phosphorylation on 2'-hydroxyl of the adenosine moiety of NAD to yield NADP. In Finegoldia magna (strain ATCC 29328 / DSM 20472 / WAL 2508) (Peptostreptococcus magnus), this protein is NAD kinase.